We begin with the raw amino-acid sequence, 449 residues long: Tryptophan synthase beta chain 2 (449 aa).

An N6-(pyridoxal phosphate)lysine modification is found at lysine 116.

Belongs to the TrpB family. As to quaternary structure, tetramer of two alpha and two beta chains. It depends on pyridoxal 5'-phosphate as a cofactor.

It carries out the reaction (1S,2R)-1-C-(indol-3-yl)glycerol 3-phosphate + L-serine = D-glyceraldehyde 3-phosphate + L-tryptophan + H2O. It functions in the pathway amino-acid biosynthesis; L-tryptophan biosynthesis; L-tryptophan from chorismate: step 5/5. In terms of biological role, the beta subunit is responsible for the synthesis of L-tryptophan from indole and L-serine. The chain is Tryptophan synthase beta chain 2 (trpB2) from Aeropyrum pernix (strain ATCC 700893 / DSM 11879 / JCM 9820 / NBRC 100138 / K1).